Here is an 89-residue protein sequence, read N- to C-terminus: UPF0335 protein OCAR_5086/OCA5_c28780 (89 aa).

Belongs to the UPF0335 family.

The sequence is that of UPF0335 protein OCAR_5086/OCA5_c28780 from Afipia carboxidovorans (strain ATCC 49405 / DSM 1227 / KCTC 32145 / OM5) (Oligotropha carboxidovorans).